We begin with the raw amino-acid sequence, 329 residues long: MSASPLKVAVTGAAGQIGYSLLFRLASGSLLGPDRPIELRLLEIEPALQALEGVVMELDDCAFPLLSGVEIGSDPQKIFDGVSLALLVGARPRGAGMERSDLLEANGAIFTAQGKALNAVAADDVRVGVTGNPANTNALIAMTNAPDIPRERFSALTRLDHNRAISQLAAKTGAAVTDIKKMTIWGNHSATQYPDLFHAEVAGKNAAEVVNDQAWIEDEFIPTVAKRGAAIIDARGASSAASAASATIDAARDWLLGTPADDWVSMAVVSDGSYGVPEGLISSFPVTTKGGNWTIVSGLEIDEFSRGRIDKSTAELADERSAVTELGLI.

12–18 (GAAGQIG) is a binding site for NAD(+). Substrate-binding residues include Arg93 and Arg99. Residues Asn106, Gln113, and 130–132 (TGN) contribute to the NAD(+) site. Residues Asn132 and Arg163 each contribute to the substrate site. The active-site Proton acceptor is the His188.

The protein belongs to the LDH/MDH superfamily. MDH type 2 family.

It catalyses the reaction (S)-malate + NAD(+) = oxaloacetate + NADH + H(+). Its function is as follows. Catalyzes the reversible oxidation of malate to oxaloacetate. The polypeptide is Malate dehydrogenase (Mycobacterium bovis (strain ATCC BAA-935 / AF2122/97)).